The sequence spans 549 residues: GATA-type transcription factor sreA (549 aa).

Positions 40 to 100 are disordered; that stretch reads AQAGREHPQD…TSPKSQKDTS (61 aa). Basic and acidic residues-rich tracts occupy residues 43 to 72 and 86 to 97; these read GREHPQDRHYTDNGSRKSEAGAPHSHHEGE and HHVEKTSPKSQK. The segment at 106 to 130 adopts a GATA-type 1 zinc-finger fold; the sequence is CSNCGTKSTPLWRRSPTGAMICNAC. Residues 141 to 174 form a disordered region; that stretch reads RPTKRNRTQASPEAYHPQNQSVGSQPDPAVTGSE. Residues 180 to 198 are cystein-rich region (CRR); the sequence is CPGGGNCNGTGGAEGCDGC. The tract at residues 223–244 is disordered; the sequence is GNSDAVPSPEAEAPARNSGQPE. A GATA-type 2 zinc finger spans residues 251 to 275; sequence CQNCGTTVTPLWRRDENGHPICNAC. Disordered regions lie at residues 306 to 332, 375 to 459, and 482 to 535; these read RENSPTAATHSSHGSSASPEASSPATL, NSGA…RLSS, and LGRQ…MREQ. A compositionally biased stretch (low complexity) spans 309 to 331; sequence SPTAATHSSHGSSASPEASSPAT. Residues 383-396 show a composition bias toward pro residues; that stretch reads HHPPPPRLLEPGHP. Low complexity predominate over residues 485-497; it reads QQQSQPHHPQSSP. The span at 498 to 515 shows a compositional bias: polar residues; that stretch reads LAPTQAASQSLPGVSNMD. A coiled-coil region spans residues 511-549; the sequence is VSNMDNHVEDRRAKLQREAEEMREQLRAKERELAELAGQ. Positions 516–535 are enriched in basic and acidic residues; that stretch reads NHVEDRRAKLQREAEEMREQ.

The protein resides in the nucleus. Its function is as follows. GATA-type transcription repressor that regulates iron- acquisition genes through specific binding GATA sequence elements of target promoters. Iron acquisition regulation is critical for survival under both iron-limiting conditions (to acquire essential iron) and iron-replete conditions (to limit iron toxicity). SreA targets include genes encoding a number of key iron-regulated factors such as those involved in siderophore biosynthesis. This Emericella nidulans (strain FGSC A4 / ATCC 38163 / CBS 112.46 / NRRL 194 / M139) (Aspergillus nidulans) protein is GATA-type transcription factor sreA.